A 33-amino-acid polypeptide reads, in one-letter code: GLLSGLKKVGKHVAKNVAVSLMDSLKCKISGDC.

Cysteines 27 and 33 form a disulfide.

As to expression, expressed by the skin glands.

The protein resides in the secreted. Functionally, antibacterial activity against Gram-positive bacterium S.aureus and Gram-negative bacterium E.coli. No activity against C.albicans. The chain is Ranatuerin-1T from Rana temporaria (European common frog).